Reading from the N-terminus, the 425-residue chain is Adenylosuccinate synthetase (425 aa).

Residues 12 to 18 (GDEGKGK) and 40 to 42 (GHT) each bind GTP. Catalysis depends on Asp-13, which acts as the Proton acceptor. 2 residues coordinate Mg(2+): Asp-13 and Gly-40. IMP contacts are provided by residues 13–16 (DEGK), 38–41 (NAGH), Thr-130, Arg-144, Gln-225, Thr-240, and Arg-304. The Proton donor role is filled by His-41. 300 to 306 (ATTGRPR) is a binding site for substrate. GTP contacts are provided by residues Arg-306, 332 to 334 (KLD), and 414 to 416 (SVG).

It belongs to the adenylosuccinate synthetase family. In terms of assembly, homodimer. Requires Mg(2+) as cofactor.

It is found in the cytoplasm. It catalyses the reaction IMP + L-aspartate + GTP = N(6)-(1,2-dicarboxyethyl)-AMP + GDP + phosphate + 2 H(+). It functions in the pathway purine metabolism; AMP biosynthesis via de novo pathway; AMP from IMP: step 1/2. Plays an important role in the de novo pathway of purine nucleotide biosynthesis. Catalyzes the first committed step in the biosynthesis of AMP from IMP. The polypeptide is Adenylosuccinate synthetase (Desulfovibrio desulfuricans (strain ATCC 27774 / DSM 6949 / MB)).